A 168-amino-acid chain; its full sequence is Photosystem I assembly protein Ycf3 (168 aa).

3 TPR repeats span residues alanine 35–proline 68, serine 72–leucine 105, and glycine 120–asparagine 153.

Belongs to the Ycf3 family.

The protein localises to the plastid. The protein resides in the chloroplast thylakoid membrane. Essential for the assembly of the photosystem I (PSI) complex. May act as a chaperone-like factor to guide the assembly of the PSI subunits. This Nicotiana sylvestris (Wood tobacco) protein is Photosystem I assembly protein Ycf3.